Here is a 546-residue protein sequence, read N- to C-terminus: Chaperonin GroEL (546 aa).

ATP-binding positions include 29–32, K50, 86–90, G414, 477–479, and D493; these read TLGP, DGTTT, and NAL.

The protein belongs to the chaperonin (HSP60) family. As to quaternary structure, forms a cylinder of 14 subunits composed of two heptameric rings stacked back-to-back. Interacts with the co-chaperonin GroES.

The protein localises to the cytoplasm. It carries out the reaction ATP + H2O + a folded polypeptide = ADP + phosphate + an unfolded polypeptide.. Together with its co-chaperonin GroES, plays an essential role in assisting protein folding. The GroEL-GroES system forms a nano-cage that allows encapsulation of the non-native substrate proteins and provides a physical environment optimized to promote and accelerate protein folding. The chain is Chaperonin GroEL from Leptospira interrogans serogroup Icterohaemorrhagiae serovar copenhageni (strain Fiocruz L1-130).